The following is a 229-amino-acid chain: Peptidyl-prolyl cis-trans isomerase FKBP17-1, chloroplastic (229 aa).

A chloroplast-targeting transit peptide spans 1–63 (MIRCFAWTPL…SISLSIIAVT (63 aa)). The PPIase FKBP-type domain maps to 105–225 (GDQIEIHYYG…VFDIELVSTR (121 aa)).

Belongs to the FKBP-type PPIase family.

It is found in the plastid. It localises to the chloroplast thylakoid lumen. It catalyses the reaction [protein]-peptidylproline (omega=180) = [protein]-peptidylproline (omega=0). In terms of biological role, PPIases accelerate the folding of proteins. It catalyzes the cis-trans isomerization of proline imidic peptide bonds in oligopeptides. The protein is Peptidyl-prolyl cis-trans isomerase FKBP17-1, chloroplastic (FKBP17-1) of Arabidopsis thaliana (Mouse-ear cress).